The primary structure comprises 306 residues: Curved DNA-binding protein (306 aa).

The 65-residue stretch at 5-69 (DYYAIMGVKP…QRRAEYDQLW (65 aa)) folds into the J domain.

It is found in the cytoplasm. It localises to the nucleoid. Its function is as follows. DNA-binding protein that preferentially recognizes a curved DNA sequence. It is probably a functional analog of DnaJ; displays overlapping activities with DnaJ, but functions under different conditions, probably acting as a molecular chaperone in an adaptive response to environmental stresses other than heat shock. Lacks autonomous chaperone activity; binds native substrates and targets them for recognition by DnaK. Its activity is inhibited by the binding of CbpM. The sequence is that of Curved DNA-binding protein from Salmonella choleraesuis (strain SC-B67).